We begin with the raw amino-acid sequence, 351 residues long: Translation initiation factor eIF2B subunit beta (351 aa).

It belongs to the eIF-2B alpha/beta/delta subunits family. Component of the translation initiation factor 2B (eIF2B) complex which is a heterodecamer of two sets of five different subunits: alpha, beta, gamma, delta and epsilon. Subunits alpha, beta and delta comprise a regulatory subcomplex and subunits epsilon and gamma comprise a catalytic subcomplex. Within the complex, the hexameric regulatory complex resides at the center, with the two heterodimeric catalytic subcomplexes bound on opposite sides.

It localises to the cytoplasm. It is found in the cytosol. Activated by the chemical integrated stress response (ISR) inhibitor ISRIB which stimulates guanine nucleotide exchange factor activity for both phosphorylated and unphosphorylated eIF2. Functionally, acts as a component of the translation initiation factor 2B (eIF2B) complex, which catalyzes the exchange of GDP for GTP on eukaryotic initiation factor 2 (eIF2) gamma subunit. Its guanine nucleotide exchange factor activity is repressed when bound to eIF2 complex phosphorylated on the alpha subunit, thereby limiting the amount of methionyl-initiator methionine tRNA available to the ribosome and consequently global translation is repressed. The sequence is that of Translation initiation factor eIF2B subunit beta (EIF2B2) from Homo sapiens (Human).